A 317-amino-acid chain; its full sequence is Protoheme IX farnesyltransferase (317 aa).

9 helical membrane-spanning segments follow: residues 29-49, 53-73, 102-122, 123-143, 151-171, 179-199, 224-241, 245-267, and 283-303; these read LILL…QGRV, LLLI…TINC, VFLA…FANL, LSAC…THWL, IVIG…AVTG, VLFG…AMLI, IFLY…LVYP, VSWG…AWQL, and FSIL…LLLP.

The protein belongs to the UbiA prenyltransferase family. Protoheme IX farnesyltransferase subfamily.

The protein localises to the cell inner membrane. It carries out the reaction heme b + (2E,6E)-farnesyl diphosphate + H2O = Fe(II)-heme o + diphosphate. It participates in porphyrin-containing compound metabolism; heme O biosynthesis; heme O from protoheme: step 1/1. Its function is as follows. Converts heme B (protoheme IX) to heme O by substitution of the vinyl group on carbon 2 of heme B porphyrin ring with a hydroxyethyl farnesyl side group. The sequence is that of Protoheme IX farnesyltransferase from Thermosynechococcus vestitus (strain NIES-2133 / IAM M-273 / BP-1).